The sequence spans 221 residues: Phosphoenolpyruvate guanylyltransferase (221 aa).

Phosphoenolpyruvate-binding residues include T154, G169, and S172.

The protein belongs to the CofC family.

The catalysed reaction is phosphoenolpyruvate + GTP + H(+) = enolpyruvoyl-2-diphospho-5'-guanosine + diphosphate. Its pathway is cofactor biosynthesis; coenzyme F420 biosynthesis. In terms of biological role, guanylyltransferase that catalyzes the activation of phosphoenolpyruvate (PEP) as enolpyruvoyl-2-diphospho-5'-guanosine, via the condensation of PEP with GTP. It is involved in the biosynthesis of coenzyme F420, a hydride carrier cofactor. The chain is Phosphoenolpyruvate guanylyltransferase from Mycolicibacterium smegmatis (strain ATCC 700084 / mc(2)155) (Mycobacterium smegmatis).